A 96-amino-acid polypeptide reads, in one-letter code: MQITDVRVRKIAAEGKMKAIVSVTFDNEFVVHDIKVIEGQNGLFIAMPSRKTPDGEFKDIAHPINTQTREKIQKAILGEYEKVKNEETVTEEKVEE.

Belongs to the SpoVG family.

In terms of biological role, could be involved in septation. This chain is Putative septation protein SpoVG, found in Clostridium kluyveri (strain ATCC 8527 / DSM 555 / NBRC 12016 / NCIMB 10680 / K1).